The chain runs to 507 residues: ATP synthase subunit alpha, chloroplastic (507 aa).

170 to 177 (GDRQTGKT) lines the ATP pocket.

The protein belongs to the ATPase alpha/beta chains family. F-type ATPases have 2 components, CF(1) - the catalytic core - and CF(0) - the membrane proton channel. CF(1) has five subunits: alpha(3), beta(3), gamma(1), delta(1), epsilon(1). CF(0) has four main subunits: a, b, b' and c.

The protein localises to the plastid. It is found in the chloroplast thylakoid membrane. The enzyme catalyses ATP + H2O + 4 H(+)(in) = ADP + phosphate + 5 H(+)(out). Produces ATP from ADP in the presence of a proton gradient across the membrane. The alpha chain is a regulatory subunit. In Oenothera glazioviana (Large-flowered evening primrose), this protein is ATP synthase subunit alpha, chloroplastic.